The following is a 99-amino-acid chain: A-type ATP synthase subunit F (99 aa).

Belongs to the V-ATPase F subunit family. As to quaternary structure, has multiple subunits with at least A(3), B(3), C, D, E, F, H, I and proteolipid K(x).

It localises to the cell membrane. Component of the A-type ATP synthase that produces ATP from ADP in the presence of a proton gradient across the membrane. This Methanococcus maripaludis (strain C5 / ATCC BAA-1333) protein is A-type ATP synthase subunit F.